The primary structure comprises 447 residues: Glycylpeptide N-tetradecanoyltransferase (447 aa).

Tetradecanoyl-CoA is bound by residues 38–41 (YKFW), 171–173 (LCV), and 179–183 (SKRLA). Residue leucine 447 is the Proton acceptor; via carboxylate of the active site.

Belongs to the NMT family. In terms of assembly, monomer.

It localises to the cytoplasm. The catalysed reaction is N-terminal glycyl-[protein] + tetradecanoyl-CoA = N-tetradecanoylglycyl-[protein] + CoA + H(+). Its function is as follows. Adds a myristoyl group to the N-terminal glycine residue of certain cellular proteins. This is Glycylpeptide N-tetradecanoyltransferase (NMT1) from Kluyveromyces lactis (strain ATCC 8585 / CBS 2359 / DSM 70799 / NBRC 1267 / NRRL Y-1140 / WM37) (Yeast).